The following is a 339-amino-acid chain: DNA-directed RNA polymerase subunit alpha (339 aa).

The segment at 1-235 is alpha N-terminal domain (alpha-NTD); the sequence is MVREEVAVST…DLFIPFLHGE (235 aa). The segment at 267 to 339 is alpha C-terminal domain (alpha-CTD); the sequence is KAIALECIFI…FTIDLPKNKF (73 aa).

This sequence belongs to the RNA polymerase alpha chain family. As to quaternary structure, in plastids the minimal PEP RNA polymerase catalytic core is composed of four subunits: alpha, beta, beta', and beta''. When a (nuclear-encoded) sigma factor is associated with the core the holoenzyme is formed, which can initiate transcription.

It is found in the plastid. Its subcellular location is the chloroplast. It carries out the reaction RNA(n) + a ribonucleoside 5'-triphosphate = RNA(n+1) + diphosphate. In terms of biological role, DNA-dependent RNA polymerase catalyzes the transcription of DNA into RNA using the four ribonucleoside triphosphates as substrates. The chain is DNA-directed RNA polymerase subunit alpha from Drimys granadensis.